We begin with the raw amino-acid sequence, 179 residues long: Cytochrome b6-f complex iron-sulfur subunit 1 (179 aa).

Residues 21 to 43 (LLTFGTVTGVALGALYPVVNYFI) traverse the membrane as a helical segment. Residues 61–162 (GNDVSVSKFL…AKTENDKIVL (102 aa)) enclose the Rieske domain. Residues cysteine 108, histidine 110, cysteine 126, and histidine 129 each contribute to the [2Fe-2S] cluster site. An intrachain disulfide couples cysteine 113 to cysteine 128.

Belongs to the Rieske iron-sulfur protein family. In terms of assembly, the 4 large subunits of the cytochrome b6-f complex are cytochrome b6, subunit IV (17 kDa polypeptide, PetD), cytochrome f and the Rieske protein, while the 4 small subunits are PetG, PetL, PetM and PetN. The complex functions as a dimer. The cofactor is [2Fe-2S] cluster.

It is found in the cellular thylakoid membrane. It catalyses the reaction 2 oxidized [plastocyanin] + a plastoquinol + 2 H(+)(in) = 2 reduced [plastocyanin] + a plastoquinone + 4 H(+)(out). Component of the cytochrome b6-f complex, which mediates electron transfer between photosystem II (PSII) and photosystem I (PSI), cyclic electron flow around PSI, and state transitions. The chain is Cytochrome b6-f complex iron-sulfur subunit 1 from Trichormus variabilis (strain ATCC 29413 / PCC 7937) (Anabaena variabilis).